The following is a 157-amino-acid chain: SsrA-binding protein (157 aa).

Belongs to the SmpB family.

It localises to the cytoplasm. In terms of biological role, required for rescue of stalled ribosomes mediated by trans-translation. Binds to transfer-messenger RNA (tmRNA), required for stable association of tmRNA with ribosomes. tmRNA and SmpB together mimic tRNA shape, replacing the anticodon stem-loop with SmpB. tmRNA is encoded by the ssrA gene; the 2 termini fold to resemble tRNA(Ala) and it encodes a 'tag peptide', a short internal open reading frame. During trans-translation Ala-aminoacylated tmRNA acts like a tRNA, entering the A-site of stalled ribosomes, displacing the stalled mRNA. The ribosome then switches to translate the ORF on the tmRNA; the nascent peptide is terminated with the 'tag peptide' encoded by the tmRNA and targeted for degradation. The ribosome is freed to recommence translation, which seems to be the essential function of trans-translation. This is SsrA-binding protein from Chromohalobacter salexigens (strain ATCC BAA-138 / DSM 3043 / CIP 106854 / NCIMB 13768 / 1H11).